We begin with the raw amino-acid sequence, 172 residues long: Small ribosomal subunit protein uS5 (172 aa).

Residues 16-79 (LKDRLVAINR…ESAKKNLTRV (64 aa)) enclose the S5 DRBM domain.

Belongs to the universal ribosomal protein uS5 family. Part of the 30S ribosomal subunit. Contacts proteins S4 and S8.

Its function is as follows. With S4 and S12 plays an important role in translational accuracy. Located at the back of the 30S subunit body where it stabilizes the conformation of the head with respect to the body. In Bacteroides fragilis (strain ATCC 25285 / DSM 2151 / CCUG 4856 / JCM 11019 / LMG 10263 / NCTC 9343 / Onslow / VPI 2553 / EN-2), this protein is Small ribosomal subunit protein uS5.